A 300-amino-acid polypeptide reads, in one-letter code: Protoheme IX farnesyltransferase (300 aa).

A run of 9 helical transmembrane segments spans residues Ile20–Gly40, Trp49–Tyr69, Val97–Ile117, Ala122–Val142, Leu145–Ala165, Leu176–Tyr196, Ala217–Gly237, Leu242–Tyr262, and Leu278–Phe298.

Belongs to the UbiA prenyltransferase family. Protoheme IX farnesyltransferase subfamily.

It localises to the cell inner membrane. It catalyses the reaction heme b + (2E,6E)-farnesyl diphosphate + H2O = Fe(II)-heme o + diphosphate. The protein operates within porphyrin-containing compound metabolism; heme O biosynthesis; heme O from protoheme: step 1/1. In terms of biological role, converts heme B (protoheme IX) to heme O by substitution of the vinyl group on carbon 2 of heme B porphyrin ring with a hydroxyethyl farnesyl side group. The protein is Protoheme IX farnesyltransferase of Flavobacterium johnsoniae (strain ATCC 17061 / DSM 2064 / JCM 8514 / BCRC 14874 / CCUG 350202 / NBRC 14942 / NCIMB 11054 / UW101) (Cytophaga johnsonae).